Reading from the N-terminus, the 436-residue chain is 3-ketoacyl-CoA thiolase (436 aa).

C99 serves as the catalytic Acyl-thioester intermediate. Residues H392 and C422 each act as proton acceptor in the active site.

The protein belongs to the thiolase-like superfamily. Thiolase family. Heterotetramer of two alpha chains (FadJ) and two beta chains (FadI).

It localises to the cytoplasm. It carries out the reaction an acyl-CoA + acetyl-CoA = a 3-oxoacyl-CoA + CoA. Its pathway is lipid metabolism; fatty acid beta-oxidation. Functionally, catalyzes the final step of fatty acid oxidation in which acetyl-CoA is released and the CoA ester of a fatty acid two carbons shorter is formed. The protein is 3-ketoacyl-CoA thiolase of Enterobacter sp. (strain 638).